We begin with the raw amino-acid sequence, 405 residues long: Glucose-1-phosphate adenylyltransferase 1 (405 aa).

Alpha-D-glucose 1-phosphate-binding positions include Tyr-96, Gly-161, 176-177, and Ser-194; that span reads EK.

It belongs to the bacterial/plant glucose-1-phosphate adenylyltransferase family. Homotetramer.

It carries out the reaction alpha-D-glucose 1-phosphate + ATP + H(+) = ADP-alpha-D-glucose + diphosphate. Its pathway is glycan biosynthesis; glycogen biosynthesis. Involved in the biosynthesis of ADP-glucose, a building block required for the elongation reactions to produce glycogen. Catalyzes the reaction between ATP and alpha-D-glucose 1-phosphate (G1P) to produce pyrophosphate and ADP-Glc. The protein is Glucose-1-phosphate adenylyltransferase 1 of Vibrio vulnificus (strain YJ016).